The chain runs to 411 residues: Probable 26S proteasome regulatory subunit rpn-6.2 (411 aa).

The region spanning Tyr-212–Gly-381 is the PCI domain.

It belongs to the proteasome subunit S9 family. As to quaternary structure, component of the lid subcomplex of the 19S proteasome regulatory particle complex (also named PA700 complex). The 26S proteasome consists of a 20S proteasome core and two 19S regulatory subunits.

Component of the lid subcomplex of the 26S proteasome, a multiprotein complex involved in the ATP-dependent degradation of ubiquitinated proteins. In the complex, rpn-6.2 is required for proteasome assembly. This chain is Probable 26S proteasome regulatory subunit rpn-6.2, found in Caenorhabditis briggsae.